The following is a 117-amino-acid chain: UPF0102 protein RHOS4_03930 (117 aa).

This sequence belongs to the UPF0102 family.

The polypeptide is UPF0102 protein RHOS4_03930 (Cereibacter sphaeroides (strain ATCC 17023 / DSM 158 / JCM 6121 / CCUG 31486 / LMG 2827 / NBRC 12203 / NCIMB 8253 / ATH 2.4.1.) (Rhodobacter sphaeroides)).